A 152-amino-acid polypeptide reads, in one-letter code: Small ribosomal subunit protein uS8m (152 aa).

Belongs to the universal ribosomal protein uS8 family.

Its subcellular location is the mitochondrion. This is Small ribosomal subunit protein uS8m (mrps8) from Dictyostelium citrinum (Slime mold).